A 380-amino-acid polypeptide reads, in one-letter code: Crotonobetainyl-CoA reductase (380 aa).

The protein belongs to the acyl-CoA dehydrogenase family. In terms of assembly, homotetramer. Requires FAD as cofactor.

Its subcellular location is the cytoplasm. The catalysed reaction is 4-(trimethylamino)butanoyl-CoA + oxidized [electron-transfer flavoprotein] + H(+) = crotonobetainyl-CoA + reduced [electron-transfer flavoprotein]. It functions in the pathway amine and polyamine metabolism; carnitine metabolism. Catalyzes the reduction of crotonobetainyl-CoA to gamma-butyrobetainyl-CoA. The sequence is that of Crotonobetainyl-CoA reductase from Escherichia coli (strain UTI89 / UPEC).